Here is a 157-residue protein sequence, read N- to C-terminus: Endoribonuclease YbeY (157 aa).

The Zn(2+) site is built by H114, H118, and H124.

It belongs to the endoribonuclease YbeY family. Requires Zn(2+) as cofactor.

It is found in the cytoplasm. Its function is as follows. Single strand-specific metallo-endoribonuclease involved in late-stage 70S ribosome quality control and in maturation of the 3' terminus of the 16S rRNA. This Yersinia pestis protein is Endoribonuclease YbeY.